The following is a 518-amino-acid chain: MQYSIKQILNNANDKLNKIGINLPELEARILLQHVTNKPIEHLLIKLNEQLSEAEIEAFEKLLERRLEHEPIAYITGIKEFYSREFIVNKHVLIPRIDTEILIDVVIGLVVSRNDLNTCSKLKSLDSVKTIQHYNILELGTGSGCIAISLLCELPNTSVIATDISVDAIKVAKSNTIKHNVTDRIQIIHSNWFEKLNKQKFDLIVSNPPYISHSEKLEMAIETINYEPHIALFAEEDGLEAYSIIAKNAKQFLKPNGKIILEIGFSQAEKVCQIFLNYGYNIDHIYQDLQSHNRVIEISPINLNRSYARRIGKSLSKMQQKLLDNELPKYLFSKEKFASEKRKIFLEIGFGMGEHFINQAKINPDTLFIGVEVYLNGVANVLKHAAQHNIMNFLLFPNNLDLILNDLPNNSLDGIYILFPDPWIKNKKKKKRILNKERLNILQNKLKNNGNLVFASDIENYFYETITLIRQNGNFEIIHNDDYLKPHDNYIITKYHQKAINENRTAKFMILQHALTGH.

Residues 1–300 (MQYSIKQILN…SHNRVIEISP (300 aa)) are hemK. An RF MTase region spans residues 1–302 (MQYSIKQILN…NRVIEISPIN (302 aa)). S-adenosyl-L-methionine-binding positions include 140–144 (GTGSG), aspartate 163, tryptophan 192, asparagine 207, glutamate 347, glutamate 372, asparagine 399, and aspartate 421. 207-210 (NPPY) is a binding site for substrate. The tract at residues 301-518 (INLNRSYARR…MILQHALTGH (218 aa)) is tRNA (guanine-N(7)-)-methyltransferase. Residues 305–518 (RSYARRIGKS…MILQHALTGH (214 aa)) form a tRNA MTase region. Aspartate 421 is an active-site residue. Positions 425 and 457 each coordinate substrate.

In the C-terminal section; belongs to the class I-like SAM-binding methyltransferase superfamily. TrmB family. This sequence in the N-terminal section; belongs to the protein N5-glutamine methyltransferase family. PrmC subfamily.

It carries out the reaction L-glutaminyl-[peptide chain release factor] + S-adenosyl-L-methionine = N(5)-methyl-L-glutaminyl-[peptide chain release factor] + S-adenosyl-L-homocysteine + H(+). The enzyme catalyses guanosine(46) in tRNA + S-adenosyl-L-methionine = N(7)-methylguanosine(46) in tRNA + S-adenosyl-L-homocysteine. Functionally, methylates the class 1 translation termination release factors RF1/PrfA and RF2/PrfB on the glutamine residue of the universally conserved GGQ motif. In terms of biological role, catalyzes the formation of N(7)-methylguanine at position 46 (m7G46) in tRNA. The protein is Bifunctional methyltransferase (prmC/trmB) of Rickettsia typhi (strain ATCC VR-144 / Wilmington).